The primary structure comprises 1140 residues: Probable DNA-directed RNA polymerase II subunit RPB2 homolog (1140 aa).

Position 773 (aspartate 773) interacts with Mg(2+). Residues cysteine 1092, cysteine 1095, cysteine 1105, and cysteine 1108 each contribute to the Zn(2+) site. The C4-type zinc-finger motif lies at 1092 to 1108 (CKDCGMMSSTSKKCHHC).

This sequence belongs to the RNA polymerase beta chain family.

It carries out the reaction RNA(n) + a ribonucleoside 5'-triphosphate = RNA(n+1) + diphosphate. Its function is as follows. Component of the DNA-dependent RNA polymerase that catalyzes the transcription of DNA into RNA using the four ribonucleoside triphosphates as substrates. Second largest component of RNA polymerase II which synthesizes mRNA precursors and many functional non-coding RNAs. Proposed to contribute to the polymerase catalytic activity and forms the polymerase active center together with the largest subunit. The sequence is that of Probable DNA-directed RNA polymerase II subunit RPB2 homolog from Invertebrate iridescent virus 3 (IIV-3).